The primary structure comprises 127 residues: Holo-[acyl-carrier-protein] synthase (127 aa).

Residues aspartate 8 and glutamate 57 each coordinate Mg(2+).

This sequence belongs to the P-Pant transferase superfamily. AcpS family. It depends on Mg(2+) as a cofactor.

Its subcellular location is the cytoplasm. The enzyme catalyses apo-[ACP] + CoA = holo-[ACP] + adenosine 3',5'-bisphosphate + H(+). In terms of biological role, transfers the 4'-phosphopantetheine moiety from coenzyme A to a Ser of acyl-carrier-protein. The sequence is that of Holo-[acyl-carrier-protein] synthase from Vesicomyosocius okutanii subsp. Calyptogena okutanii (strain HA).